Here is a 203-residue protein sequence, read N- to C-terminus: V-type ATP synthase subunit D (203 aa).

The protein belongs to the V-ATPase D subunit family.

Its function is as follows. Produces ATP from ADP in the presence of a proton gradient across the membrane. The polypeptide is V-type ATP synthase subunit D (atpD) (Chlamydia muridarum (strain MoPn / Nigg)).